Consider the following 453-residue polypeptide: Transcription factor bHLH110 (453 aa).

Disordered regions lie at residues 1-37 (MDSA…YGAS) and 177-197 (SSLP…RGNF). 2 stretches are compositionally biased toward low complexity: residues 8 to 32 (QLQD…SDPS) and 177 to 192 (SSLP…SSQS). Residues 322 to 371 (VESRSSCPPFKVRKEKLGDRIAALQQLVSPFGKTDTASVLMEAIGYIKFL) enclose the bHLH domain. The segment at 386–411 (SRNRPGKASQLVSQSQEGDEEETRDL) is disordered.

As to quaternary structure, homodimer.

It is found in the nucleus. In Arabidopsis thaliana (Mouse-ear cress), this protein is Transcription factor bHLH110 (BHLH110).